The sequence spans 359 residues: snRNA-activating protein complex subunit 2 (359 aa).

Basic residues predominate over residues 1-11; the sequence is MKPPQRRRRVP. Disordered stretches follow at residues 1–22, 157–221, and 291–327; these read MKPPQRRRRVPARYVGEATGPT, NQDG…GSST, and TALPGEKRPRPGTEDGGTGSTGPEEPDQASPQASEPI.

Part of the SNAPc complex composed of 5 subunits: SNAPC1, SNAPC2, SNAPC3, SNAPC4 and SNAPC5. SNAPC2 interacts with TBP and SNAPC4.

The protein localises to the nucleus. Part of the SNAPc complex required for the transcription of both RNA polymerase II and III small-nuclear RNA genes. Binds to the proximal sequence element (PSE), a non-TATA-box basal promoter element common to these 2 types of genes. Recruits TBP and BRF2 to the U6 snRNA TATA box. The sequence is that of snRNA-activating protein complex subunit 2 (Snapc2) from Mus musculus (Mouse).